We begin with the raw amino-acid sequence, 211 residues long: Tudor-interacting repair regulator protein (211 aa).

Glycyl lysine isopeptide (Lys-Gly) (interchain with G-Cter in ubiquitin) cross-links involve residues lysine 10 and lysine 151. The interaction with PXN stretch occupies residues 118–205 (TLEQLHAVEI…TEKQKKALEK (88 aa)).

Belongs to the Nudix hydrolase family. TIRR subfamily. As to quaternary structure, homodimer. Interacts with TP53BP1 (via the Tudor-like domain); interaction is abolished following DNA damage and TP53BP1 phosphorylation by ATM. Interacts (via the cytoplasmic part) with SDC4. Interacts with TGFB1I1 and PXN.

The protein resides in the nucleus. Its function is as follows. Key regulator of TP53BP1 required to stabilize TP53BP1 and regulate its recruitment to chromatin. In absence of DNA damage, interacts with the tandem Tudor-like domain of TP53BP1, masking the region that binds histone H4 dimethylated at 'Lys-20' (H4K20me2), thereby preventing TP53BP1 recruitment to chromatin and maintaining TP53BP1 localization to the nucleus. Following DNA damage, ATM-induced phosphorylation of TP53BP1 and subsequent recruitment of RIF1 leads to dissociate NUDT16L1/TIRR from TP53BP1, unmasking the tandem Tudor-like domain and allowing recruitment of TP53BP1 to DNA double strand breaks (DSBs). Binds U8 snoRNA. This chain is Tudor-interacting repair regulator protein, found in Mus musculus (Mouse).